The chain runs to 138 residues: Putative esterase HI_1161 (138 aa).

It belongs to the thioesterase PaaI family.

The chain is Putative esterase HI_1161 from Haemophilus influenzae (strain ATCC 51907 / DSM 11121 / KW20 / Rd).